A 987-amino-acid polypeptide reads, in one-letter code: Voltage-gated delayed rectifier potassium channel KCNH1 (987 aa).

At 1-220 the chain is on the cytoplasmic side; that stretch reads MTMAGGRKGL…LHYCVFKTTW (220 aa). Positions 14–94 constitute a PAS domain; sequence QNTFLENIVR…QTFENYEMNS (81 aa). Residues 93–145 form the PAC domain; that stretch reads NSFEILMYKKNRTPVWFFVKIAPIRNEQDKVVLFLCTFSDITAFKQPIEDDSC. Residues 151-162 are required for phosphatidylinositol bisphosphate binding; sequence FARLTRALTSSR. Residues 221-241 traverse the membrane as a helical segment; the sequence is DWIILILTFYTAILVPYNVSF. Over 242–248 the chain is Extracellular; it reads KTRQNNV. The chain crosses the membrane as a helical span at residues 249-269; sequence AWLVVDSIVDVIFLVDIVLNF. Residues 270-290 lie on the Cytoplasmic side of the membrane; the sequence is HTTFVGPAGEVISDPKLIRMN. Residues 291 to 309 traverse the membrane as a helical segment; sequence YLKTWFVIDLLSCLPYDVI. The Extracellular portion of the chain corresponds to 310 to 345; that stretch reads NAFENVDEVSAFMGDPGKIGFADQIPPPLEGRESQG. A helical; Voltage-sensor membrane pass occupies residues 346-368; it reads ISSLFSSLKVVRLLRLGRVARKL. At 369 to 377 the chain is on the cytoplasmic side; the sequence is DHYIEYGAA. A helical transmembrane segment spans residues 378-399; the sequence is VLVLLVCVFGLAAHWMACIWYS. Residues 400 to 448 are Extracellular-facing; that stretch reads IGDYEIFDEDTKTIRNNSWLYQLAMDIGTPYQFNGSGSGKWEGGPSKNS. Residues N415 and N433 are each glycosylated (N-linked (GlcNAc...) asparagine). Positions 449-470 form an intramembrane region, pore-forming; it reads VYISSLYFTMTSLTSVGFGNIA. Positions 463–468 match the Selectivity filter motif; the sequence is SVGFGN. Over 471–477 the chain is Extracellular; that stretch reads PSTDIEK. The helical transmembrane segment at 478 to 498 threads the bilayer; sequence IFAVAIMMIGSLLYATIFGNV. Topologically, residues 499–987 are cytoplasmic; sequence TTIFQQMYAN…ESERDIFGAS (489 aa). A calmodulin-binding region spans residues 673–770; it reads KRDALQKVLE…LDDLDVEKGS (98 aa). Positions 699 to 701 are interaction with cyclic nucleotide-binding pocket; the sequence is YNL. The segment at 922–962 is CAD (involved in subunit assembly); sequence AAVLEVKHELKEDIKALSTKMTSIEKQLSEILRILTSRRSS. Residues 960 to 987 are disordered; it reads RSSQSPQELFEISRPQSPESERDIFGAS. A phosphoserine mark is found at S972, S976, and S979. The span at 978 to 987 shows a compositional bias: basic and acidic residues; the sequence is ESERDIFGAS.

Belongs to the potassium channel family. H (Eag) (TC 1.A.1.20) subfamily. Kv10.1/KCNH1 sub-subfamily. Homomultimer. The potassium channel is composed of a homo- or heterotetrameric complex of pore-forming alpha subunits that can associate with modulating beta subunits. Heteromultimer with KCNH5/EAG2. Interacts with ALG10B. Interacts with RABEP1. Interacts (via C-terminus) with CTTN. Interacts (via C-terminal cytoplasmic region) with Ca(2+)-bound calmodulin. In terms of processing, channel activity is regulated via tyrosine phosphorylation/dephosphorylation by SRC and PTPN6. Detected in cerebellum, cortex and retina.

Its subcellular location is the cell membrane. The protein localises to the nucleus inner membrane. The protein resides in the cell projection. It is found in the dendrite. It localises to the axon. Its subcellular location is the presynaptic cell membrane. The protein localises to the perikaryon. The protein resides in the postsynaptic density membrane. It is found in the early endosome membrane. It carries out the reaction K(+)(in) = K(+)(out). Channel activity is inhibited by interaction with Ca(2+)-bound calmodulin. Interaction of a single pore-forming alpha subunit with a calmodulin chain is sufficient to promote channel closure. Extracellular magnesium ion concentrations up to 4 mM modulate channel activity by slowing down current activation in a reversible fashion. Channel activity is not regulated by cyclic nucleotides. Channel activity is inhibited by binding intracellular phosphatidylinositol-3,5-bisphosphate and phosphatidylinositol-4,5-bisphosphate (PIP2), but is not inhibited by phosphatidylinositol 4-phosphate. Pore-forming (alpha) subunit of a voltage-gated delayed rectifier potassium channel that mediates outward-rectifying potassium currents which, on depolarization, reaches a steady-state level and do not inactivate. The activation kinetics depend on the prepulse potential and external divalent cation concentration. With negative prepulses, the current activation is delayed and slowed down several fold, whereas more positive prepulses speed up activation. The time course of activation is biphasic with a fast and a slowly activating current component. Activates at more positive membrane potentials and exhibit a steeper activation curve. Channel properties are modulated by subunit assembly. Mediates IK(NI) current in myoblasts. Involved in the regulation of cell proliferation and differentiation, in particular adipogenic and osteogenic differentiation in bone marrow-derived mesenchymal stem cells (MSCs). The chain is Voltage-gated delayed rectifier potassium channel KCNH1 from Bos taurus (Bovine).